The following is a 442-amino-acid chain: tRNA(Ile)-lysidine synthase (442 aa).

28–33 contributes to the ATP binding site; that stretch reads SGGLDS.

It belongs to the tRNA(Ile)-lysidine synthase family.

The protein localises to the cytoplasm. It catalyses the reaction cytidine(34) in tRNA(Ile2) + L-lysine + ATP = lysidine(34) in tRNA(Ile2) + AMP + diphosphate + H(+). Functionally, ligates lysine onto the cytidine present at position 34 of the AUA codon-specific tRNA(Ile) that contains the anticodon CAU, in an ATP-dependent manner. Cytidine is converted to lysidine, thus changing the amino acid specificity of the tRNA from methionine to isoleucine. This is tRNA(Ile)-lysidine synthase from Pseudomonas aeruginosa (strain ATCC 15692 / DSM 22644 / CIP 104116 / JCM 14847 / LMG 12228 / 1C / PRS 101 / PAO1).